Consider the following 108-residue polypeptide: uncharacterized protein (108 aa).

2 helical membrane-spanning segments follow: residues V51–L71 and P86–L106.

The protein resides in the membrane. This is an uncharacterized protein from Saccharomyces cerevisiae (strain ATCC 204508 / S288c) (Baker's yeast).